Here is a 908-residue protein sequence, read N- to C-terminus: Serine/threonine-protein kinase WARTS homolog (908 aa).

Residues 42 to 70 adopt a coiled-coil conformation; that stretch reads EIRVGRHRAKLDEIRESLKAYEHEAGLLS. 2 stretches are compositionally biased toward low complexity: residues 115–125 and 168–181; these read VSSAAVSNSNS and PSTT…TTTE. Disordered regions lie at residues 115-134, 162-183, 203-225, and 388-412; these read VSSA…GGHK, MIRN…TEES, NNNA…DSSP, and KSRA…VSSP. A compositionally biased stretch (pro residues) spans 392–404; that stretch reads QPPPPQYNQPSEP. The stretch at 439–470 forms a coiled coil; it reads YMEQHVERLLQQYKEREKRMKQLEKEMVSAQL. One can recognise a Protein kinase domain in the interval 502–807; it reads FTVISHIGVG…TAQVKNHPWF (306 aa). Residues 508 to 516 and Lys-531 each bind ATP; that span reads IGVGAFGKV. Residue Asp-625 is the Proton acceptor of the active site. The region spanning 808 to 874 is the AGC-kinase C-terminal domain; the sequence is RGIDWVNLRK…RHFFDTDSVG (67 aa).

The protein belongs to the protein kinase superfamily. AGC Ser/Thr protein kinase family. As to quaternary structure, interacts (via N-terminus) with yap-1 (via WW domain). It depends on Mg(2+) as a cofactor. As to expression, expressed in muscles and epithelial tissues including pharynx, intestine and hypodermis. Expressed in vulval and spermathecal seam cells.

Its subcellular location is the cytoplasm. It localises to the apical cell membrane. The enzyme catalyses L-seryl-[protein] + ATP = O-phospho-L-seryl-[protein] + ADP + H(+). It catalyses the reaction L-threonyl-[protein] + ATP = O-phospho-L-threonyl-[protein] + ADP + H(+). Phosphorylates yap-1 which may negatively regulate yap-1 nuclear localization. Plays an essential role in larval development. Regulates growth, the formation of gut granules, lifespan and cell and body sizes probably in synergy with the TGF-beta sma/mab pathway. Does not appear to regulate apoptosis and proliferation. In addition, may synergize with the TGF-beta daf-7 dauer pathway to regulate entry into the dauer stage. Maintains the cellular integrity of intestinal cells by regulating the localization of apical actin and junctional proteins. In Caenorhabditis elegans, this protein is Serine/threonine-protein kinase WARTS homolog.